A 358-amino-acid polypeptide reads, in one-letter code: Alanine racemase, biosynthetic (358 aa).

The active-site Proton acceptor; specific for D-alanine is lysine 34. Lysine 34 carries the post-translational modification N6-(pyridoxal phosphate)lysine. Position 130 (arginine 130) interacts with substrate. The Proton acceptor; specific for L-alanine role is filled by tyrosine 254. Residue methionine 302 participates in substrate binding.

Belongs to the alanine racemase family. It depends on pyridoxal 5'-phosphate as a cofactor.

The catalysed reaction is L-alanine = D-alanine. The protein operates within amino-acid biosynthesis; D-alanine biosynthesis; D-alanine from L-alanine: step 1/1. Its pathway is cell wall biogenesis; peptidoglycan biosynthesis. Functionally, catalyzes the interconversion of L-alanine and D-alanine. Provides the D-alanine required for cell wall biosynthesis. The chain is Alanine racemase, biosynthetic (alr) from Pseudomonas aeruginosa (strain ATCC 15692 / DSM 22644 / CIP 104116 / JCM 14847 / LMG 12228 / 1C / PRS 101 / PAO1).